The sequence spans 447 residues: Phosphoglucosamine mutase (447 aa).

S103 acts as the Phosphoserine intermediate in catalysis. Positions 103, 242, 244, and 246 each coordinate Mg(2+). S103 carries the post-translational modification Phosphoserine.

The protein belongs to the phosphohexose mutase family. It depends on Mg(2+) as a cofactor. Activated by phosphorylation.

The enzyme catalyses alpha-D-glucosamine 1-phosphate = D-glucosamine 6-phosphate. Functionally, catalyzes the conversion of glucosamine-6-phosphate to glucosamine-1-phosphate. The polypeptide is Phosphoglucosamine mutase (Dinoroseobacter shibae (strain DSM 16493 / NCIMB 14021 / DFL 12)).